The following is a 161-amino-acid chain: Endoribonuclease YbeY (161 aa).

Residues H127, H131, and H137 each coordinate Zn(2+).

This sequence belongs to the endoribonuclease YbeY family. Zn(2+) is required as a cofactor.

The protein localises to the cytoplasm. In terms of biological role, single strand-specific metallo-endoribonuclease involved in late-stage 70S ribosome quality control and in maturation of the 3' terminus of the 16S rRNA. The sequence is that of Endoribonuclease YbeY from Listeria innocua serovar 6a (strain ATCC BAA-680 / CLIP 11262).